The chain runs to 311 residues: Cell division protein FtsQ (311 aa).

The tract at residues 1–28 (MTTRSPARPLIARRSTPAPTPAPHDPAP) is disordered. Residues 1–46 (MTTRSPARPLIARRSTPAPTPAPHDPAPSRLSYRVTRLWLTPIFRK) are Cytoplasmic-facing. The chain crosses the membrane as a helical span at residues 47 to 67 (ALHLGIPVFALFAAVTWYLGD). Topologically, residues 68–311 (ETRVAELFEA…AERPDGDTRG (244 aa)) are periplasmic. The POTRA domain occupies 91–159 (FRVNVLGIDG…GYLAVRIDER (69 aa)).

This sequence belongs to the FtsQ/DivIB family. FtsQ subfamily.

It is found in the cell inner membrane. Functionally, essential cell division protein. The polypeptide is Cell division protein FtsQ (Jannaschia sp. (strain CCS1)).